The chain runs to 139 residues: Protein archease (139 aa).

Ca(2+) contacts are provided by D12, D138, and I139.

This sequence belongs to the archease family.

In terms of biological role, activates the tRNA-splicing ligase complex by facilitating the enzymatic turnover of catalytic subunit RtcB. Acts by promoting the guanylylation of RtcB, a key intermediate step in tRNA ligation. Can also alter the NTP specificity of RtcB such that ATP, dGTP or ITP is used efficiently. This chain is Protein archease, found in Sulfolobus acidocaldarius (strain ATCC 33909 / DSM 639 / JCM 8929 / NBRC 15157 / NCIMB 11770).